We begin with the raw amino-acid sequence, 98 residues long: Protein FAM24A (98 aa).

Residues 1 to 29 form the signal peptide; it reads MFDLRTKVMIGIASTLLIAAIVLITVVFC.

This sequence belongs to the FAM24 family.

Its subcellular location is the secreted. This chain is Protein FAM24A (Fam24a), found in Rattus norvegicus (Rat).